We begin with the raw amino-acid sequence, 161 residues long: Putative defense protein 2 (161 aa).

Residues 1-11 (LSWSALALTSA) form the signal peptide. A Reelin domain is found at 12–161 (YPTGAPTSAC…SAPVKILSHH (150 aa)). A disulfide bridge links Cys-21 with Cys-98. Residue Asn-91 is glycosylated (N-linked (GlcNAc...) asparagine).

The protein belongs to the insect defense protein family.

It is found in the secreted. Functionally, may have antimicrobial activity. The sequence is that of Putative defense protein 2 from Antheraea mylitta (Tasar silkworm).